A 152-amino-acid polypeptide reads, in one-letter code: MDHILALVLALLPLSLCVALPGALDAMDVEKMKSKVTWKAQGLVARIDKHFPDRGLRFDTDKVEGSTSVVASLESYNNLISDRFGGVSQIKTEISSLAGYLNHWREGNCQEQQPKVWPRRNIFNHTVSLEALMRVREFLKLLQKNVDLLERC.

Positions 1–26 are cleaved as a signal peptide; that stretch reads MDHILALVLALLPLSLCVALPGALDA. Residues Cys-109 and Cys-152 are joined by a disulfide bond.

It belongs to the leptin family. Expressed mostly in the liver.

It localises to the secreted. Functionally, may function as part of a signaling pathway that acts to regulate the size of the body fat depot. This is Leptin (lep) from Takifugu rubripes (Japanese pufferfish).